The following is a 318-amino-acid chain: MWLPLLLGALLWAVLWLLRDRQSLPASNAFVFITGCDSGFGRLLALQLDQRGFRVLASCLTPSGAEDLQRVASSRLHTTLLDITDPQSVQQAAKWVEMHVKEAGLFGLVNNAGVAGIIGPTPWLTRDDFQRVLNVNTMGPIGVTLALLPLLQQARGRVINITSVLGRLAANGGGYCVSKFGLEAFSDSLRRDVAHFGIRVSIVEPGFFRTPVTNLESLEKTLQACWARLPPATQAHYGGAFLTKYLKMQQRIMNLICDPDLTKVSRCLEHALTARHPRTRYSPGWDAKLLWLPASYLPASLVDAVLTWVLPKPAQAVY.

Residues Met-1–Arg-21 form a helical membrane-spanning segment. At Gln-22–Lys-288 the chain is on the lumenal side. An NADP(+)-binding site is contributed by Phe-32 to Leu-56. Asn-160 carries N-linked (GlcNAc...) asparagine glycosylation. Ser-163 is a substrate binding site. Catalysis depends on Tyr-175, which acts as the Proton acceptor. The chain crosses the membrane as a helical span at residues Leu-289–Val-309. Residues Leu-310–Tyr-318 are Cytoplasmic-facing.

Belongs to the short-chain dehydrogenases/reductases (SDR) family. In terms of assembly, homodimer. As to expression, widely expressed. In the eye, abundant in the retinal pigment epithelium.

It localises to the endoplasmic reticulum membrane. The catalysed reaction is 11-cis-retinol + NAD(+) = 11-cis-retinal + NADH + H(+). The enzyme catalyses 9-cis-retinol + NAD(+) = 9-cis-retinal + NADH + H(+). It carries out the reaction 13-cis-retinol + NAD(+) = 13-cis-retinal + NADH + H(+). It catalyses the reaction androsterone + NAD(+) = 5alpha-androstan-3,17-dione + NADH + H(+). The catalysed reaction is 5alpha-androstane-3alpha,17beta-diol + NAD(+) = 17beta-hydroxy-5alpha-androstan-3-one + NADH + H(+). Its pathway is cofactor metabolism; retinol metabolism. Its activity is regulated as follows. Inhibited by 9-cis-, 13-cis- and all-trans-retinoic acids, with the most potent inhibitor being 13-cis-retinoic acid. Weakly inhibited by oleic acid. Its function is as follows. Catalyzes the oxidation of cis-isomers of retinol, including 11-cis-, 9-cis-, and 13-cis-retinol in an NAD-dependent manner. Has no activity towards all-trans retinal. Plays a significant role in 11-cis retinol oxidation in the retinal pigment epithelium cells (RPE). Also recognizes steroids (androsterone, androstanediol) as its substrates. This Homo sapiens (Human) protein is Retinol dehydrogenase 5.